A 447-amino-acid chain; its full sequence is Argininosuccinate synthase (447 aa).

ATP contacts are provided by residues 20–28 (AFSGGLDTS) and A46. Y102 contributes to the L-citrulline binding site. ATP contacts are provided by G132 and T134. Residues T134, N138, and D139 each coordinate L-aspartate. N138 provides a ligand contact to L-citrulline. Residue D139 participates in ATP binding. R142 and S195 together coordinate L-citrulline. D197 lines the ATP pocket. Positions 204, 206, and 283 each coordinate L-citrulline.

This sequence belongs to the argininosuccinate synthase family. Type 2 subfamily. In terms of assembly, homotetramer.

Its subcellular location is the cytoplasm. The enzyme catalyses L-citrulline + L-aspartate + ATP = 2-(N(omega)-L-arginino)succinate + AMP + diphosphate + H(+). The protein operates within amino-acid biosynthesis; L-arginine biosynthesis; L-arginine from L-ornithine and carbamoyl phosphate: step 2/3. The chain is Argininosuccinate synthase from Neisseria meningitidis serogroup C (strain 053442).